Reading from the N-terminus, the 293-residue chain is Large ribosomal subunit protein uL4 (293 aa).

Composition is skewed to basic and acidic residues over residues 1–14 (MAEE…EKTP) and 33–55 (KTTE…ESTK). Disordered stretches follow at residues 1-72 (MAEE…IKSE) and 130-166 (QRQG…STRS).

The protein belongs to the universal ribosomal protein uL4 family. As to quaternary structure, part of the 50S ribosomal subunit.

Its function is as follows. One of the primary rRNA binding proteins, this protein initially binds near the 5'-end of the 23S rRNA. It is important during the early stages of 50S assembly. It makes multiple contacts with different domains of the 23S rRNA in the assembled 50S subunit and ribosome. Functionally, forms part of the polypeptide exit tunnel. The chain is Large ribosomal subunit protein uL4 from Mycoplasma mobile (strain ATCC 43663 / 163K / NCTC 11711) (Mesomycoplasma mobile).